Consider the following 440-residue polypeptide: Alpha-ionylideneethane synthase aba3 (440 aa).

It belongs to the alpha-ionylideneethane synthase family.

It functions in the pathway hormone biosynthesis. Functionally, alpha-ionylideneethane synthase; part of the gene cluster that mediates the biosynthesis of abscisic acid (ABA), a phytohormone that acts antagonistically toward salicylic acid (SA), jasmonic acid (JA) and ethylene (ETH) signaling, to impede plant defense responses. The first step of the pathway catalyzes the reaction from farnesyl diphosphate to alpha-ionylideneethane performed by the alpha-ionylideneethane synthase aba3 via a three-step reaction mechanism involving 2 neutral intermediates, beta-farnesene and allofarnesene. The cytochrome P450 monooxygenase aba1 might then be involved in the conversion of alpha-ionylideneethane to alpha-ionylideneacetic acid. Alpha-ionylideneacetic acid is further converted to abscisic acid in 2 steps involving the cytochrome P450 monooxygenase aba2 and the short-chain dehydrogenase/reductase aba4, via the intermediates 1'-deoxy-ABA or 1',4'-trans-diol-ABA, depending on the order of action of these 2 enzymes. Aba2 is responsible for the hydroxylation of carbon atom C-1' and aba4 might be involved in the oxidation of the C-4' carbon atom. The protein is Alpha-ionylideneethane synthase aba3 of Botryotinia fuckeliana (strain B05.10) (Noble rot fungus).